A 490-amino-acid polypeptide reads, in one-letter code: Cytochrome P450 2C2 (490 aa).

Cys-435 lines the heme pocket.

This sequence belongs to the cytochrome P450 family. It depends on heme as a cofactor.

Its subcellular location is the endoplasmic reticulum membrane. It localises to the microsome membrane. The enzyme catalyses an organic molecule + reduced [NADPH--hemoprotein reductase] + O2 = an alcohol + oxidized [NADPH--hemoprotein reductase] + H2O + H(+). Cytochromes P450 are a group of heme-thiolate monooxygenases. In liver microsomes, this enzyme is involved in an NADPH-dependent electron transport pathway. It oxidizes a variety of structurally unrelated compounds, including steroids, fatty acids, and xenobiotics. In the epoxidation of arachidonic acid it generates only 14,15- and 11,12-cis-epoxyeicosatrienoic acids. This Oryctolagus cuniculus (Rabbit) protein is Cytochrome P450 2C2 (CYP2C2).